We begin with the raw amino-acid sequence, 436 residues long: 3-ketoacyl-CoA thiolase (436 aa).

Cysteine 99 functions as the Acyl-thioester intermediate in the catalytic mechanism. Residues histidine 392 and cysteine 422 each act as proton acceptor in the active site.

Belongs to the thiolase-like superfamily. Thiolase family. In terms of assembly, heterotetramer of two alpha chains (FadJ) and two beta chains (FadI).

It localises to the cytoplasm. The catalysed reaction is an acyl-CoA + acetyl-CoA = a 3-oxoacyl-CoA + CoA. It functions in the pathway lipid metabolism; fatty acid beta-oxidation. Its function is as follows. Catalyzes the final step of fatty acid oxidation in which acetyl-CoA is released and the CoA ester of a fatty acid two carbons shorter is formed. This Shewanella pealeana (strain ATCC 700345 / ANG-SQ1) protein is 3-ketoacyl-CoA thiolase.